A 299-amino-acid chain; its full sequence is Tyrosine recombinase XerC (299 aa).

In terms of domain architecture, Core-binding (CB) spans Pro3 to Leu87. The Tyr recombinase domain occupies Pro108 to Asp287. Residues Arg147, Lys171, His239, Arg242, and His265 contribute to the active site. Tyr274 serves as the catalytic O-(3'-phospho-DNA)-tyrosine intermediate.

It belongs to the 'phage' integrase family. XerC subfamily. In terms of assembly, forms a cyclic heterotetrameric complex composed of two molecules of XerC and two molecules of XerD.

The protein localises to the cytoplasm. Its function is as follows. Site-specific tyrosine recombinase, which acts by catalyzing the cutting and rejoining of the recombining DNA molecules. The XerC-XerD complex is essential to convert dimers of the bacterial chromosome into monomers to permit their segregation at cell division. It also contributes to the segregational stability of plasmids. This is Tyrosine recombinase XerC from Shewanella sp. (strain ANA-3).